The primary structure comprises 421 residues: 4-hydroxy-3-methylbut-2-en-1-yl diphosphate synthase (flavodoxin) (421 aa).

C311, C314, C357, and E364 together coordinate [4Fe-4S] cluster.

Belongs to the IspG family. The cofactor is [4Fe-4S] cluster.

It catalyses the reaction (2E)-4-hydroxy-3-methylbut-2-enyl diphosphate + oxidized [flavodoxin] + H2O + 2 H(+) = 2-C-methyl-D-erythritol 2,4-cyclic diphosphate + reduced [flavodoxin]. It participates in isoprenoid biosynthesis; isopentenyl diphosphate biosynthesis via DXP pathway; isopentenyl diphosphate from 1-deoxy-D-xylulose 5-phosphate: step 5/6. In terms of biological role, converts 2C-methyl-D-erythritol 2,4-cyclodiphosphate (ME-2,4cPP) into 1-hydroxy-2-methyl-2-(E)-butenyl 4-diphosphate. The protein is 4-hydroxy-3-methylbut-2-en-1-yl diphosphate synthase (flavodoxin) of Xanthomonas campestris pv. campestris (strain 8004).